We begin with the raw amino-acid sequence, 180 residues long: Large ribosomal subunit protein uL10 (180 aa).

Belongs to the universal ribosomal protein uL10 family. Part of the ribosomal stalk of the 50S ribosomal subunit. The N-terminus interacts with L11 and the large rRNA to form the base of the stalk. The C-terminus forms an elongated spine to which L12 dimers bind in a sequential fashion forming a multimeric L10(L12)X complex.

Functionally, forms part of the ribosomal stalk, playing a central role in the interaction of the ribosome with GTP-bound translation factors. The chain is Large ribosomal subunit protein uL10 from Thermosipho melanesiensis (strain DSM 12029 / CIP 104789 / BI429).